Consider the following 123-residue polypeptide: Transmembrane protein 254 (123 aa).

Residue A2 is modified to N-acetylalanine. 3 helical membrane-spanning segments follow: residues 15-35 (LFWF…VFWP), 61-81 (LCNG…YAIV), and 95-115 (LLWF…LIAY).

It is found in the membrane. In Homo sapiens (Human), this protein is Transmembrane protein 254 (TMEM254).